Here is an 857-residue protein sequence, read N- to C-terminus: DNA mismatch repair protein MutS (857 aa).

Position 608–615 (608–615 (GPNMSGKS)) interacts with ATP.

This sequence belongs to the DNA mismatch repair MutS family.

In terms of biological role, this protein is involved in the repair of mismatches in DNA. It is possible that it carries out the mismatch recognition step. This protein has a weak ATPase activity. The sequence is that of DNA mismatch repair protein MutS from Lactobacillus johnsonii (strain CNCM I-12250 / La1 / NCC 533).